The chain runs to 300 residues: 4-hydroxy-tetrahydrodipicolinate synthase (300 aa).

Residue threonine 45 participates in pyruvate binding. The Proton donor/acceptor role is filled by tyrosine 140. Lysine 169 functions as the Schiff-base intermediate with substrate in the catalytic mechanism. Isoleucine 210 serves as a coordination point for pyruvate.

Belongs to the DapA family. As to quaternary structure, homotetramer; dimer of dimers.

The protein resides in the cytoplasm. The enzyme catalyses L-aspartate 4-semialdehyde + pyruvate = (2S,4S)-4-hydroxy-2,3,4,5-tetrahydrodipicolinate + H2O + H(+). Its pathway is amino-acid biosynthesis; L-lysine biosynthesis via DAP pathway; (S)-tetrahydrodipicolinate from L-aspartate: step 3/4. Catalyzes the condensation of (S)-aspartate-beta-semialdehyde [(S)-ASA] and pyruvate to 4-hydroxy-tetrahydrodipicolinate (HTPA). The polypeptide is 4-hydroxy-tetrahydrodipicolinate synthase (Helicobacter pylori (strain HPAG1)).